The following is a 597-amino-acid chain: Electron transfer flavoprotein-ubiquinone oxidoreductase, mitochondrial (597 aa).

53 to 67 (VVIVGGGPSGLSAAI) serves as a coordination point for FAD. The stretch at 91–112 (IGGHTLSGAVIETRALDELIPN) is an intramembrane region. A ubiquinone contacts are provided by Gly285 and Gly286. Residues 409–426 (IDPATYDKNIRDTYVVKE) lie within the membrane without spanning it. Positions 540, 566, 569, and 572 each coordinate [4Fe-4S] cluster. A 4Fe-4S ferredoxin-type domain is found at 557-586 (KRLQINAQNCIHCKTCDIKDPQQNINWVTP).

This sequence belongs to the ETF-QO/FixC family. As to quaternary structure, monomer. It depends on [4Fe-4S] cluster as a cofactor. The cofactor is FAD.

Its subcellular location is the mitochondrion inner membrane. It catalyses the reaction a ubiquinone + reduced [electron-transfer flavoprotein] = a ubiquinol + oxidized [electron-transfer flavoprotein] + H(+). In terms of biological role, accepts electrons from ETF and reduces ubiquinone. This chain is Electron transfer flavoprotein-ubiquinone oxidoreductase, mitochondrial (let-721), found in Caenorhabditis elegans.